The chain runs to 577 residues: Proline--tRNA ligase (577 aa).

It belongs to the class-II aminoacyl-tRNA synthetase family. ProS type 1 subfamily. As to quaternary structure, homodimer.

It localises to the cytoplasm. The catalysed reaction is tRNA(Pro) + L-proline + ATP = L-prolyl-tRNA(Pro) + AMP + diphosphate. Catalyzes the attachment of proline to tRNA(Pro) in a two-step reaction: proline is first activated by ATP to form Pro-AMP and then transferred to the acceptor end of tRNA(Pro). As ProRS can inadvertently accommodate and process non-cognate amino acids such as alanine and cysteine, to avoid such errors it has two additional distinct editing activities against alanine. One activity is designated as 'pretransfer' editing and involves the tRNA(Pro)-independent hydrolysis of activated Ala-AMP. The other activity is designated 'posttransfer' editing and involves deacylation of mischarged Ala-tRNA(Pro). The misacylated Cys-tRNA(Pro) is not edited by ProRS. The polypeptide is Proline--tRNA ligase (Thermotoga maritima (strain ATCC 43589 / DSM 3109 / JCM 10099 / NBRC 100826 / MSB8)).